We begin with the raw amino-acid sequence, 84 residues long: Large ribosomal subunit protein bL27 (84 aa).

The segment at 1-25 (MSHKKAGGSTRNGRDSNAQRRGVKK) is disordered.

It belongs to the bacterial ribosomal protein bL27 family.

This Desulforapulum autotrophicum (strain ATCC 43914 / DSM 3382 / VKM B-1955 / HRM2) (Desulfobacterium autotrophicum) protein is Large ribosomal subunit protein bL27.